Here is a 1551-residue protein sequence, read N- to C-terminus: MEQRLRALEQLVRGEAGGSPGLDGLLDLLLGVHQELSSAPLRRERNVAQFLSWASPFVTKVKELRLQRDDFEILKVIGRGAFGEVAVVRQRGSGQIFAMKMLHKWEMLKRAETACFREERDVLVKGDSRWVTALHYAFQDEEYLYLVMDYYAGGDLLTLLSRFEDRLPPELAQFYLAEMVLAIHSLHQLGYVHRDVKPDNILLDMNGHIRLADFGSCLRLNNNGMVDSSVAVGTPDYISPEILQAMEEGKGHYGPQCDWWSLGVCAYELLFGETPFYAESLVETYGKIMNHEDHLQFPADVTDVPASAQDLIRQLLCRQEERLGRGGLDDFRKHPFFEGVDWERLATSTAPYIPELRGPMDTSNFDVDDDTLNRPETLPPSSHGAFSGHHLPFVGFTYTSGSPFDVQSSELMAAPEGTPHCVEQVKVELSHKCQEPLHGPLQPQELVRLQKEVQVLQEKLAETLRDSKASLSQTDGLHARSPAPNIQLQQEKDRLQQELTEAQAALRVQDAELCQAQNRQEEFLQRLWEAQEREAAAASQIQALNSQLEEAWVVRRELEGQVTTLSQEVTRLQGQCKQESSQAKTVHAAPETNGIGSPEGQSQEAQLRKEVAALREQLEHACSQGISVGKEEVLCRLQEENQRLSREQERLAGELELELQSKQRLEGERRETESNWEAQIADILSWVNDEKVSRGYLQALATKMAEELESLRNVGTQTLPTRPLDHQWKARRLQKMEASARLELQSALEAEIRAKQSLQEQLTQVQEAQRQAERRLQEAEKQSQALQQEVAELREELQARGPGDARPSTSLIPLLSFWNTEKDSAKDPGNSGEGPRSGAEAELRPEGRRSLRMGSVFPRVPAATTTPAEGPPAKPGSHTLRPRSFPSPTKCLRCTSLMLGLGRQGLGCDTCGYFCHSACASQAPPCPVPPELLRTALGVHPETGTGTAYEGFLSVPRPSGVRRGWQRVYAALSDSRLLLFDAPDPRGSLASGVLLQALDLRDPQFSATPVLAPDVIHAQSKDLPRIFRVTASQLTVPPTTCTVLLLAENEGERERWLQVLGELQRLLLDARPRPRPVYTLKEAYDNGLPLLPHALCAAVIDQERLALGTEEGLFVIHLHSNDIFQVGDCRRVQRLAVSSAAGLLAVLCGRGPSVRLFALDELESAEVAGAKIPESRGCQALVAGRILQARTPVLCVAVKRQVLCYQLGPGPGPWQRRIRELQAPAPVQSLGLLGDRLCVGAAGTFALYPLLNEAAPLALGTGLVAEELPASRGGLGEALGAVELSLSELLLLFATAGVYVDSAGRKSRSHELLWPAAPTGWGYTAPYLTVFSENALDVFDVRRAEWVQTVPLKKVRPLNPEGSLFLYGTEKVRLTYLRNPLAEKDEFDIPDLTDNSRRQLFRTKSKRRFFFRVSDELRQQQRREMLKDPFVRSKFISPPTNFNHLVHVGPTEGRPNTRDGTRAQEQKSRGARSSGPQRPHSFSEAFRRPVSTGSDGLPGETDPLVKRKPWTSLSSESVSCPQGSLSPAASLIQVSERPRSLPPDPESESSP.

A Protein kinase domain is found at 71–337 (FEILKVIGRG…LDDFRKHPFF (267 aa)). ATP contacts are provided by residues 77–85 (IGRGAFGEV) and lysine 100. Aspartate 195 functions as the Proton acceptor in the catalytic mechanism. Phosphoserine; by autocatalysis is present on residues serine 216 and serine 228. Threonine 234 carries the phosphothreonine; by autocatalysis modification. An AGC-kinase C-terminal domain is found at 338–408 (EGVDWERLAT…TSGSPFDVQS (71 aa)). 2 coiled-coil regions span residues 442–675 (QPQE…TESN) and 729–801 (KARR…QARG). The disordered stretch occupies residues 578-605 (QESSQAKTVHAAPETNGIGSPEGQSQEA). Positions 820–886 (TEKDSAKDPG…SHTLRPRSFP (67 aa)) are disordered. Over residues 839–849 (AEAELRPEGRR) the composition is skewed to basic and acidic residues. The Phorbol-ester/DAG-type zinc finger occupies 877–926 (SHTLRPRSFPSPTKCLRCTSLMLGLGRQGLGCDTCGYFCHSACASQAPPC). Positions 946-1065 (GTAYEGFLSV…WLQVLGELQR (120 aa)) constitute a PH domain. The CNH domain occupies 1091–1365 (LPHALCAAVI…RPLNPEGSLF (275 aa)). The CRIB domain maps to 1436 to 1449 (ISPPTNFNHLVHVG). The tract at residues 1441–1551 (NFNHLVHVGP…PPDPESESSP (111 aa)) is disordered. Residues 1455-1468 (PNTRDGTRAQEQKS) are compositionally biased toward basic and acidic residues. The residue at position 1481 (serine 1481) is a Phosphoserine. The segment covering 1511–1527 (TSLSSESVSCPQGSLSP) has biased composition (polar residues).

It belongs to the protein kinase superfamily. AGC Ser/Thr protein kinase family. DMPK subfamily. Homodimer and homotetramer via the coiled coil regions. Interacts tightly with GTP-bound but not GDP-bound CDC42. Mg(2+) is required as a cofactor.

It is found in the cytoplasm. It carries out the reaction L-seryl-[protein] + ATP = O-phospho-L-seryl-[protein] + ADP + H(+). The enzyme catalyses L-threonyl-[protein] + ATP = O-phospho-L-threonyl-[protein] + ADP + H(+). With respect to regulation, maintained in an inactive, closed conformation by an interaction between the kinase domain and the negative autoregulatory C-terminal coiled-coil region. Agonist binding to the phorbol ester binding site disrupts this, releasing the kinase domain to allow N-terminus-mediated dimerization and kinase activation by transautophosphorylation. In terms of biological role, may act as a downstream effector of CDC42 in cytoskeletal reorganization. Contributes to the actomyosin contractility required for cell invasion, through the regulation of MYPT1 and thus MLC2 phosphorylation. This is Serine/threonine-protein kinase MRCK gamma from Mus musculus (Mouse).